We begin with the raw amino-acid sequence, 206 residues long: High frequency lysogenization protein HflD homolog (206 aa).

This sequence belongs to the HflD family.

It is found in the cytoplasm. It localises to the cell inner membrane. The sequence is that of High frequency lysogenization protein HflD homolog from Pseudomonas savastanoi pv. phaseolicola (strain 1448A / Race 6) (Pseudomonas syringae pv. phaseolicola (strain 1448A / Race 6)).